The primary structure comprises 261 residues: Syntaxin-7 (261 aa).

At Ser2 the chain carries N-acetylserine. At 2 to 238 (SYTPGVGGDP…DYQRKSRKTL (237 aa)) the chain is on the cytoplasmic side. Thr4 is subject to Phosphothreonine. Ser45 carries the phosphoserine modification. A coiled-coil region spans residues 47–69 (ELRQQLQQKQQYTNQLAKETDKY). Residue Ser75 is modified to Phosphoserine. Thr79 is subject to Phosphothreonine. A phosphoserine mark is found at Ser125, Ser126, Ser129, and Ser205. Positions 129–148 (SGSFPEDSSKERNLVSWESQ) are disordered. Positions 165-227 (LRLIHERESS…QQANQQLSRA (63 aa)) constitute a t-SNARE coiled-coil homology domain. Residues 239 to 259 (CIIILILVIGVAIISLIIWGL) form a helical; Anchor for type IV membrane protein membrane-spanning segment. At 260–261 (NH) the chain is on the vesicular side.

The protein belongs to the syntaxin family. As to quaternary structure, forms a SNARE complex with VTI1B, STX8 and VAMP8 which functions in the homotypic fusion of late endosomes. Component of the SNARE complex composed of STX7, STX8, VAMP7 and VTI1B that is required for heterotypic fusion of late endosomes with lysosomes. Interacts with VPS11, VPS16 and VPS18. Interacts with VPS33A. Interacts with TPC1. Highest expression is found in placenta followed by heart, skeletal muscle, kidney and brain. Low expression is found in pancreas, lung and liver.

The protein resides in the early endosome membrane. In terms of biological role, may be involved in protein trafficking from the plasma membrane to the early endosome (EE) as well as in homotypic fusion of endocytic organelles. Mediates the endocytic trafficking from early endosomes to late endosomes and lysosomes. The sequence is that of Syntaxin-7 (STX7) from Homo sapiens (Human).